Reading from the N-terminus, the 678-residue chain is UvrABC system protein C (678 aa).

A compositionally biased stretch (basic residues) spans Met1–Phe13. The segment at Met1–Ser25 is disordered. The region spanning His69–Val147 is the GIY-YIG domain. A UVR domain is found at Gln257–Ile292.

The protein belongs to the UvrC family. In terms of assembly, interacts with UvrB in an incision complex.

The protein resides in the cytoplasm. Functionally, the UvrABC repair system catalyzes the recognition and processing of DNA lesions. UvrC both incises the 5' and 3' sides of the lesion. The N-terminal half is responsible for the 3' incision and the C-terminal half is responsible for the 5' incision. The sequence is that of UvrABC system protein C from Bartonella quintana (strain Toulouse) (Rochalimaea quintana).